A 212-amino-acid chain; its full sequence is Thymidylate kinase (212 aa).

10–17 (GIDGCGKT) contributes to the ATP binding site.

This sequence belongs to the thymidylate kinase family.

The enzyme catalyses dTMP + ATP = dTDP + ADP. Phosphorylation of dTMP to form dTDP in both de novo and salvage pathways of dTTP synthesis. The chain is Thymidylate kinase from Prochlorococcus marinus (strain AS9601).